Reading from the N-terminus, the 378-residue chain is Anhydro-N-acetylmuramic acid kinase (378 aa).

23–30 is a binding site for ATP; that stretch reads GTSMDGAD.

The protein belongs to the anhydro-N-acetylmuramic acid kinase family.

The catalysed reaction is 1,6-anhydro-N-acetyl-beta-muramate + ATP + H2O = N-acetyl-D-muramate 6-phosphate + ADP + H(+). Its pathway is amino-sugar metabolism; 1,6-anhydro-N-acetylmuramate degradation. It participates in cell wall biogenesis; peptidoglycan recycling. Its function is as follows. Catalyzes the specific phosphorylation of 1,6-anhydro-N-acetylmuramic acid (anhMurNAc) with the simultaneous cleavage of the 1,6-anhydro ring, generating MurNAc-6-P. Is required for the utilization of anhMurNAc either imported from the medium or derived from its own cell wall murein, and thus plays a role in cell wall recycling. This is Anhydro-N-acetylmuramic acid kinase from Bordetella pertussis (strain Tohama I / ATCC BAA-589 / NCTC 13251).